Here is a 202-residue protein sequence, read N- to C-terminus: Holliday junction branch migration complex subunit RuvA (202 aa).

The segment at 1–64 (MIGRLSGTLL…EDAHLLFGFA (64 aa)) is domain I. The interval 65–143 (GRAERELFRQ…SLPSADLLSP (79 aa)) is domain II. The flexible linker stretch occupies residues 144 to 152 (APAAGAALL). The tract at residues 153-202 (VENDERADISQALQALGYSAREAEAALKSVPDGTDVATGIRLALKALARP) is domain III.

Belongs to the RuvA family. As to quaternary structure, homotetramer. Forms an RuvA(8)-RuvB(12)-Holliday junction (HJ) complex. HJ DNA is sandwiched between 2 RuvA tetramers; dsDNA enters through RuvA and exits via RuvB. An RuvB hexamer assembles on each DNA strand where it exits the tetramer. Each RuvB hexamer is contacted by two RuvA subunits (via domain III) on 2 adjacent RuvB subunits; this complex drives branch migration. In the full resolvosome a probable DNA-RuvA(4)-RuvB(12)-RuvC(2) complex forms which resolves the HJ.

It localises to the cytoplasm. Functionally, the RuvA-RuvB-RuvC complex processes Holliday junction (HJ) DNA during genetic recombination and DNA repair, while the RuvA-RuvB complex plays an important role in the rescue of blocked DNA replication forks via replication fork reversal (RFR). RuvA specifically binds to HJ cruciform DNA, conferring on it an open structure. The RuvB hexamer acts as an ATP-dependent pump, pulling dsDNA into and through the RuvAB complex. HJ branch migration allows RuvC to scan DNA until it finds its consensus sequence, where it cleaves and resolves the cruciform DNA. This is Holliday junction branch migration complex subunit RuvA from Laribacter hongkongensis (strain HLHK9).